Consider the following 340-residue polypeptide: 2-deoxy-scyllo-inosamine dehydrogenase (340 aa).

7 residues coordinate Zn(2+): C37, H59, C89, C92, C95, C103, and E144.

It belongs to the zinc-containing alcohol dehydrogenase family. DOIA dehydrogenase subfamily. Zn(2+) serves as cofactor.

It carries out the reaction 2-deoxy-scyllo-inosamine + NADP(+) = 3-amino-2,3-dideoxy-scyllo-inosose + NADPH + H(+). It catalyses the reaction 2-deoxy-scyllo-inosamine + NAD(+) = 3-amino-2,3-dideoxy-scyllo-inosose + NADH + H(+). It functions in the pathway metabolic intermediate biosynthesis; 2-deoxystreptamine biosynthesis; 2-deoxystreptamine from D-glucose 6-phosphate: step 3/4. The protein operates within antibiotic biosynthesis; neomycin biosynthesis. Functionally, catalyzes the oxidation of 2-deoxy-scyllo-inosamine (DOIA) with NAD(+) or NADP(+), forming 3-amino-2,3-dideoxy-scyllo-inosose (amino-DOI). The sequence is that of 2-deoxy-scyllo-inosamine dehydrogenase (neoA) from Streptomyces fradiae (Streptomyces roseoflavus).